The sequence spans 201 residues: B-cell CLL/lymphoma 7 protein family member A (201 aa).

Positions 46-201 (YKWVPVTEPK…GKIDSSSEES (156 aa)) are disordered. Over residues 54–71 (PKSDDNKNKKKGKDDKYG) the composition is skewed to basic and acidic residues. Polar residues-rich tracts occupy residues 73–83 (EVTTPENSSSP), 93–114 (SNQS…NTSP), and 133–142 (QYPSKQPSSG). Basic and acidic residues predominate over residues 158–167 (TSKRDSKSQG). The span at 168-179 (DSESFLDSSKSA) shows a compositional bias: polar residues. Positions 192–201 (GKIDSSSEES) are enriched in basic and acidic residues.

Belongs to the BCL7 family.

The sequence is that of B-cell CLL/lymphoma 7 protein family member A (bcl7a) from Danio rerio (Zebrafish).